The sequence spans 94 residues: Large ribosomal subunit protein bL25 (94 aa).

It belongs to the bacterial ribosomal protein bL25 family. As to quaternary structure, part of the 50S ribosomal subunit; part of the 5S rRNA/L5/L18/L25 subcomplex. Contacts the 5S rRNA. Binds to the 5S rRNA independently of L5 and L18.

This is one of the proteins that binds to the 5S RNA in the ribosome where it forms part of the central protuberance. This Escherichia coli O157:H7 protein is Large ribosomal subunit protein bL25.